We begin with the raw amino-acid sequence, 76 residues long: Defensin-like protein 125 (76 aa).

The N-terminal stretch at 1-25 (MTKAITLAIFMVVLVLGMVTKETQG) is a signal peptide. 4 disulfide bridges follow: Cys-30/Cys-74, Cys-41/Cys-60, Cys-46/Cys-68, and Cys-50/Cys-70.

The protein belongs to the DEFL family.

The protein localises to the secreted. The sequence is that of Defensin-like protein 125 (LCR54) from Arabidopsis thaliana (Mouse-ear cress).